The primary structure comprises 236 residues: Small ribosomal subunit protein uS2c (236 aa).

It belongs to the universal ribosomal protein uS2 family.

The protein localises to the plastid. The protein resides in the chloroplast. The chain is Small ribosomal subunit protein uS2c (rps2) from Gossypium barbadense (Sea Island cotton).